Reading from the N-terminus, the 289-residue chain is Pantothenate synthetase (289 aa).

Position 30-37 (30-37 (MGYLHKGH)) interacts with ATP. The Proton donor role is filled by His37. Gln61 is a (R)-pantoate binding site. Residue Gln61 coordinates beta-alanine. An ATP-binding site is contributed by 147–150 (GEKD). Residue Gln153 participates in (R)-pantoate binding. ATP is bound by residues Val176 and 184–187 (CSSR).

This sequence belongs to the pantothenate synthetase family. Homodimer.

Its subcellular location is the cytoplasm. It carries out the reaction (R)-pantoate + beta-alanine + ATP = (R)-pantothenate + AMP + diphosphate + H(+). The protein operates within cofactor biosynthesis; (R)-pantothenate biosynthesis; (R)-pantothenate from (R)-pantoate and beta-alanine: step 1/1. Its function is as follows. Catalyzes the condensation of pantoate with beta-alanine in an ATP-dependent reaction via a pantoyl-adenylate intermediate. This Brucella anthropi (strain ATCC 49188 / DSM 6882 / CCUG 24695 / JCM 21032 / LMG 3331 / NBRC 15819 / NCTC 12168 / Alc 37) (Ochrobactrum anthropi) protein is Pantothenate synthetase.